The chain runs to 506 residues: Subtilisin-like serine protease Cur l 4.0101 (506 aa).

The first 15 residues, 1–15 (MKYSLIAALPALAAA), serve as a signal peptide directing secretion. A propeptide spans 16 to 135 (SPTFSTETIH…IERDSEVRIL (120 aa)) (removed in mature form). The Inhibitor I9 domain maps to 43 to 134 (SYMVVFKKHV…YIERDSEVRI (92 aa)). Residues 59–79 (HDWVQSVHSKNTQERMELRKR) form a disordered region. The segment covering 69 to 79 (NTQERMELRKR) has biased composition (basic and acidic residues). Residues 147–453 (PWGLARISHR…GGSSNYTDII (307 aa)) form the Peptidase S8 domain. Active-site charge relay system residues include aspartate 183 and histidine 215. N-linked (GlcNAc...) asparagine glycosylation is found at asparagine 245 and asparagine 285. Residue serine 381 is the Charge relay system of the active site. The N-linked (GlcNAc...) asparagine glycan is linked to asparagine 448. The propeptide at 459 to 506 (TVKKAASKEEEKESEFRITIPSLSELEDDFEKAKESAGRKAHHVGGKL) is removed in mature form.

It belongs to the peptidase S8 family.

Its function is as follows. Serine protease. This is Subtilisin-like serine protease Cur l 4.0101 from Cochliobolus lunatus (Filamentous fungus).